The primary structure comprises 310 residues: N-acetylmuramic acid 6-phosphate etherase (310 aa).

An SIS domain is found at 64–227 (ITARLKSKGR…STSVMIKLGK (164 aa)). Glu-92 (proton donor) is an active-site residue. Residue Glu-123 is part of the active site.

It belongs to the GCKR-like family. MurNAc-6-P etherase subfamily. Homodimer.

It catalyses the reaction N-acetyl-D-muramate 6-phosphate + H2O = N-acetyl-D-glucosamine 6-phosphate + (R)-lactate. It functions in the pathway amino-sugar metabolism; N-acetylmuramate degradation. Functionally, specifically catalyzes the cleavage of the D-lactyl ether substituent of MurNAc 6-phosphate, producing GlcNAc 6-phosphate and D-lactate. The protein is N-acetylmuramic acid 6-phosphate etherase of Prochlorococcus marinus (strain NATL1A).